A 218-amino-acid chain; its full sequence is MMP 1-O-methyltransferase (218 aa).

S-adenosyl-L-methionine contacts are provided by Phe20, Gly46, Ser52, Asp71, Gly75, and Ser124. Asp141 is a binding site for Mg(2+). His144 functions as the Proton acceptor in the catalytic mechanism. Residue Arg151 coordinates S-adenosyl-L-methionine. The Mg(2+) site is built by His169 and Asp170.

The protein belongs to the methyltransferase superfamily. Homodimer. Mg(2+) serves as cofactor.

The enzyme catalyses 3,3'-di-O-methyl-4alpha-mannobiose + S-adenosyl-L-methionine = 1,3,3'-tri-O-methyl-4alpha-mannobiose + S-adenosyl-L-homocysteine + H(+). Inhibited by EDTA. Its function is as follows. Involved in the biosynthesis of 3-O-methylmannose polysaccharides (MMP), which are intracellular polymethylated polysaccharides implicated in the modulation of fatty acid metabolism in non-tuberculous mycobacteria. Specifically methylates the 1-OH position of 3,3'-di-O-methyl-4alpha-mannobiose, a probable early precursor of MMP, yielding the reducing end dimannoside of MMP. In Mycolicibacterium hassiacum (strain DSM 44199 / CIP 105218 / JCM 12690 / 3849) (Mycobacterium hassiacum), this protein is MMP 1-O-methyltransferase.